The primary structure comprises 158 residues: Endoribonuclease YbeY (158 aa).

Positions 121, 125, and 131 each coordinate Zn(2+).

It belongs to the endoribonuclease YbeY family. Requires Zn(2+) as cofactor.

Its subcellular location is the cytoplasm. Its function is as follows. Single strand-specific metallo-endoribonuclease involved in late-stage 70S ribosome quality control and in maturation of the 3' terminus of the 16S rRNA. In Exiguobacterium sibiricum (strain DSM 17290 / CCUG 55495 / CIP 109462 / JCM 13490 / 255-15), this protein is Endoribonuclease YbeY.